Reading from the N-terminus, the 509-residue chain is ATP synthase subunit alpha (509 aa).

Position 169–176 (169–176 (GDRQTGKT)) interacts with ATP.

Belongs to the ATPase alpha/beta chains family. In terms of assembly, F-type ATPases have 2 components, CF(1) - the catalytic core - and CF(0) - the membrane proton channel. CF(1) has five subunits: alpha(3), beta(3), gamma(1), delta(1), epsilon(1). CF(0) has three main subunits: a(1), b(2) and c(9-12). The alpha and beta chains form an alternating ring which encloses part of the gamma chain. CF(1) is attached to CF(0) by a central stalk formed by the gamma and epsilon chains, while a peripheral stalk is formed by the delta and b chains.

It is found in the cell inner membrane. The catalysed reaction is ATP + H2O + 4 H(+)(in) = ADP + phosphate + 5 H(+)(out). Produces ATP from ADP in the presence of a proton gradient across the membrane. The alpha chain is a regulatory subunit. This is ATP synthase subunit alpha from Brucella abortus (strain S19).